The sequence spans 158 residues: Transcription factor BTF3 homolog 4 (158 aa).

An N6-methyllysine modification is found at Lys-5. The 66-residue stretch at Thr-33–Leu-98 folds into the NAC-A/B domain. The residue at position 111 (Thr-111) is a Phosphothreonine. A disordered region spans residues Gln-123 to Asn-158. Residues Asp-134 to Asp-150 show a composition bias toward acidic residues.

Belongs to the NAC-beta family.

The polypeptide is Transcription factor BTF3 homolog 4 (BTF3L4) (Bos taurus (Bovine)).